Consider the following 293-residue polypeptide: DOMON domain-containing protein FRRS1L (293 aa).

The N-terminal stretch at 1–28 (MARPPRQHPGVWASLLLLLLTGPAACAA) is a signal peptide. The disordered stretch occupies residues 29–61 (SPADDGAGPGGRGPRGRARGDTGADEAVPRHDS). A compositionally biased stretch (basic and acidic residues) spans 46–61 (ARGDTGADEAVPRHDS). Residues 119–234 (CDYFLSYRMI…WYYLFAWGPA (116 aa)) enclose the DOMON domain. A helical transmembrane segment spans residues 271–291 (TFSSPFCLLLIVALTFYLLMG).

As to quaternary structure, component of the outer core of AMPAR complex. AMPAR complex consists of an inner core made of 4 pore-forming GluA/GRIA proteins (GRIA1, GRIA2, GRIA3 and GRIA4) and 4 major auxiliary subunits arranged in a twofold symmetry. One of the two pairs of distinct binding sites is occupied either by CNIH2, CNIH3 or CACNG2, CACNG3. The other harbors CACNG2, CACNG3, CACNG4, CACNG8 or GSG1L. This inner core of AMPAR complex is complemented by outer core constituents binding directly to the GluA/GRIA proteins at sites distinct from the interaction sites of the inner core constituents. Outer core constituents include at least PRRT1, PRRT2, CKAMP44/SHISA9, FRRS1L and NRN1. The proteins of the inner and outer core serve as a platform for other, more peripherally associated AMPAR constituents. Alone or in combination, these auxiliary subunits control the gating and pharmacology of the AMPAR complex and profoundly impact their biogenesis and protein processing. In terms of tissue distribution, expressed in adult and fetal brain. Very weak expression in medulla, spinal cord and in adult ovary.

It localises to the cell membrane. The protein localises to the synapse. Functionally, important modulator of glutamate signaling pathway. The chain is DOMON domain-containing protein FRRS1L (FRRS1L) from Homo sapiens (Human).